A 493-amino-acid chain; its full sequence is Dipeptide and tripeptide permease B (493 aa).

The Cytoplasmic segment spans residues 1 to 27 (MERSTPTGLLQQPKPFFMIFFVELWER). Residues 28 to 48 (FGYYGVQGILAVFFVQQLGFS) form a helical membrane-spanning segment. Residues 49–52 (QEQA) lie on the Periplasmic side of the membrane. The chain crosses the membrane as a helical span at residues 53-73 (FVTFGAFAALVYGLISIGGYV). Over 74-82 (GDHLLGTKR) the chain is Cytoplasmic. A helical membrane pass occupies residues 83 to 103 (TMVLGAVVLAAGYFATGLSLY). The Periplasmic portion of the chain corresponds to 104–106 (QPN). The helical transmembrane segment at 107 to 127 (LIFFALGTIAVGNGLFKANPA) threads the bilayer. Residues 128–146 (SLLSKCYPPKDPRLDGAFT) lie on the Cytoplasmic side of the membrane. Residues 147 to 167 (LFYMSINIGSLLSLSLAPVIA) form a helical membrane-spanning segment. Topologically, residues 168-169 (ER) are periplasmic. A helical transmembrane segment spans residues 170–190 (FGYTVTYYLCGIGLIFALLVY). Residues 191–212 (FCCRHMVRHIGSEPDTKPLNWR) are Cytoplasmic-facing. A run of 2 helical transmembrane segments spans residues 213-233 (NLLLVLLGSAVMICVCAWLMN) and 234-254 (HVFIANLVLIALSLIVVFIFF). Topologically, residues 255–267 (REASKQDRLGRNK) are cytoplasmic. A helical transmembrane segment spans residues 268–288 (MFVAFILMIEAIVFYVLYAQM). Over 289 to 311 (PTSLNFFAINNVHHEILGFSINP) the chain is Periplasmic. A helical membrane pass occupies residues 312 to 332 (VSFQALNPFWVVVASPILASI). The Cytoplasmic portion of the chain corresponds to 333 to 350 (YTRLGSQNRDLSMPAKFT). Residues 351–371 (LGMFLCSLGFLTAAAAGMWFA) form a helical membrane-spanning segment. At 372–379 (DAQGLTSP) the chain is on the periplasmic side. Residues 380–400 (WFIVLVYLFQSLGELMISALG) traverse the membrane as a helical segment. Residues 401-424 (LAMVAALVPQYLMGFILGMWFLTQ) lie on the Cytoplasmic side of the membrane. The helical transmembrane segment at 425–445 (AASFLIGGYVATFTATPEGMT) threads the bilayer. The Periplasmic segment spans residues 446 to 456 (DPLETLPIYTD). Residues 457–477 (VFGKIGMVTLVIALVMALLIP) traverse the membrane as a helical segment. Residues 478–493 (WLNRMINSSAAEDAVA) are Cytoplasmic-facing.

The protein belongs to the major facilitator superfamily. Proton-dependent oligopeptide transporter (POT/PTR) (TC 2.A.17) family. DtpB subfamily.

Its subcellular location is the cell inner membrane. Its function is as follows. Proton-dependent permease that transports di- and tripeptides. This Yersinia enterocolitica serotype O:8 / biotype 1B (strain NCTC 13174 / 8081) protein is Dipeptide and tripeptide permease B.